The following is a 280-amino-acid chain: Ataxin-3 homolog (280 aa).

One can recognise a Josephin domain in the interval 7-187 (GGMLYHEVQE…QECPMSSSSE (181 aa)). The Nucleophile role is filled by C20. The Proton acceptor role is filled by H126. Residue D141 is part of the active site. 2 stretches are compositionally biased toward polar residues: residues 183–194 (SSSSEASNSFGQ) and 221–232 (DNVNQQRRNQAL). The tract at residues 183-240 (SSSSEASNSFGQWLSPEDAERIRKNTSSGSSARNKRSNDNVNQQRRNQALSREEVQAF) is disordered. The region spanning 243–262 (MEDDDLKAAIAASLLDASAA) is the UIM domain.

The protein localises to the nucleus. The enzyme catalyses Thiol-dependent hydrolysis of ester, thioester, amide, peptide and isopeptide bonds formed by the C-terminal Gly of ubiquitin (a 76-residue protein attached to proteins as an intracellular targeting signal).. In terms of biological role, interacts with key regulators of transcription and represses transcription. Acts as a histone-binding protein that regulates transcription. Acts as a deubiquitinating enzyme. The polypeptide is Ataxin-3 homolog (Arabidopsis thaliana (Mouse-ear cress)).